Consider the following 335-residue polypeptide: Phenylalanine--tRNA ligase alpha subunit (335 aa).

Glu262 contacts Mg(2+).

Belongs to the class-II aminoacyl-tRNA synthetase family. Phe-tRNA synthetase alpha subunit type 1 subfamily. As to quaternary structure, tetramer of two alpha and two beta subunits. It depends on Mg(2+) as a cofactor.

The protein resides in the cytoplasm. It carries out the reaction tRNA(Phe) + L-phenylalanine + ATP = L-phenylalanyl-tRNA(Phe) + AMP + diphosphate + H(+). The sequence is that of Phenylalanine--tRNA ligase alpha subunit from Prochlorococcus marinus (strain MIT 9313).